Here is a 1465-residue protein sequence, read N- to C-terminus: Myomesin-2 (1465 aa).

The interval 38-61 is disordered; the sequence is ASTQASSQKSLSQRSSSQRASSQT. The span at 41-61 shows a compositional bias: low complexity; it reads QASSQKSLSQRSSSQRASSQT. Ig-like C2-type domains follow at residues 154–245 and 266–371; these read PEIL…AAVV and PLSS…AFLF. Fibronectin type-III domains lie at 385-480, 513-608, 614-707, 710-812, and 815-912; these read APMD…ALDP, PPTG…AQDV, APGR…VQAA, VPSH…TMPE, and PAYD…ARPG. Ig-like C2-type domains lie at 904–1002, 1130–1211, and 1345–1434; these read PVLV…EELE, PHFA…QDVS, and RLIG…VTVS. Residues 1442 to 1465 are disordered; it reads IPDMAPPQQAKPKLIPASASAAGQ.

As to quaternary structure, interacts with TTN/titin.

It is found in the cytoplasm. Its subcellular location is the myofibril. The protein resides in the sarcomere. It localises to the m line. Functionally, major component of the vertebrate myofibrillar M band. Binds myosin, titin, and light meromyosin. This binding is dose dependent. This is Myomesin-2 (MYOM2) from Homo sapiens (Human).